The primary structure comprises 338 residues: Ketol-acid reductoisomerase (NADP(+)) (338 aa).

The 181-residue stretch at 1 to 181 (MNIYYDKDCD…GGGRAGIIET (181 aa)) folds into the KARI N-terminal Rossmann domain. Residues 24-27 (YGSQ), Arg-47, Ser-50, Ser-52, and 82-85 (DEHQ) contribute to the NADP(+) site. His-107 is a catalytic residue. Gly-133 is a binding site for NADP(+). Positions 182–327 (AFREETETDL…ERLRSMMPWI (146 aa)) constitute a KARI C-terminal knotted domain. Residues Asp-190, Glu-194, Glu-226, and Glu-230 each contribute to the Mg(2+) site. Residue Ser-251 participates in substrate binding.

It belongs to the ketol-acid reductoisomerase family. The cofactor is Mg(2+).

It catalyses the reaction (2R)-2,3-dihydroxy-3-methylbutanoate + NADP(+) = (2S)-2-acetolactate + NADPH + H(+). The enzyme catalyses (2R,3R)-2,3-dihydroxy-3-methylpentanoate + NADP(+) = (S)-2-ethyl-2-hydroxy-3-oxobutanoate + NADPH + H(+). The protein operates within amino-acid biosynthesis; L-isoleucine biosynthesis; L-isoleucine from 2-oxobutanoate: step 2/4. Its pathway is amino-acid biosynthesis; L-valine biosynthesis; L-valine from pyruvate: step 2/4. Functionally, involved in the biosynthesis of branched-chain amino acids (BCAA). Catalyzes an alkyl-migration followed by a ketol-acid reduction of (S)-2-acetolactate (S2AL) to yield (R)-2,3-dihydroxy-isovalerate. In the isomerase reaction, S2AL is rearranged via a Mg-dependent methyl migration to produce 3-hydroxy-3-methyl-2-ketobutyrate (HMKB). In the reductase reaction, this 2-ketoacid undergoes a metal-dependent reduction by NADPH to yield (R)-2,3-dihydroxy-isovalerate. This Nitrosococcus oceani (strain ATCC 19707 / BCRC 17464 / JCM 30415 / NCIMB 11848 / C-107) protein is Ketol-acid reductoisomerase (NADP(+)).